The chain runs to 1082 residues: Carbamoyl phosphate synthase large chain (1082 aa).

A carboxyphosphate synthetic domain region spans residues 1–401; it reads MPKDKALKKV…ALLKAVRSLE (401 aa). ATP is bound by residues arginine 129, arginine 169, glycine 175, glycine 176, lysine 208, valine 210, glutamate 215, glycine 241, isoleucine 242, histidine 243, glutamine 284, and glutamate 298. Residues 133-327 enclose the ATP-grasp 1 domain; sequence KNMCLEIGEP…IAKVATKVAV (195 aa). Mg(2+) contacts are provided by glutamine 284, glutamate 298, and asparagine 300. Mn(2+) is bound by residues glutamine 284, glutamate 298, and asparagine 300. An oligomerization domain region spans residues 402 to 561; it reads TGVTGMNLPE…YSTYEDEDEA (160 aa). The interval 562 to 944 is carbamoyl phosphate synthetic domain; the sequence is EPQAVRKVVV…ALYKACLSAG (383 aa). The region spanning 686-876 is the ATP-grasp 2 domain; sequence DQLVAELGIP…MVNLATRICL (191 aa). 10 residues coordinate ATP: arginine 722, lysine 761, leucine 763, glutamate 767, glycine 792, isoleucine 793, histidine 794, serine 795, glutamine 835, and glutamate 847. Residues glutamine 835, glutamate 847, and asparagine 849 each coordinate Mg(2+). Mn(2+) is bound by residues glutamine 835, glutamate 847, and asparagine 849. One can recognise an MGS-like domain in the interval 945–1082; that stretch reads YTLPSSGKAV…PLIPLQEYVS (138 aa). Residues 945–1082 are allosteric domain; it reads YTLPSSGKAV…PLIPLQEYVS (138 aa).

Belongs to the CarB family. Composed of two chains; the small (or glutamine) chain promotes the hydrolysis of glutamine to ammonia, which is used by the large (or ammonia) chain to synthesize carbamoyl phosphate. Tetramer of heterodimers (alpha,beta)4. The cofactor is Mg(2+). It depends on Mn(2+) as a cofactor.

It catalyses the reaction hydrogencarbonate + L-glutamine + 2 ATP + H2O = carbamoyl phosphate + L-glutamate + 2 ADP + phosphate + 2 H(+). The catalysed reaction is hydrogencarbonate + NH4(+) + 2 ATP = carbamoyl phosphate + 2 ADP + phosphate + 2 H(+). The protein operates within amino-acid biosynthesis; L-arginine biosynthesis; carbamoyl phosphate from bicarbonate: step 1/1. It functions in the pathway pyrimidine metabolism; UMP biosynthesis via de novo pathway; (S)-dihydroorotate from bicarbonate: step 1/3. Functionally, large subunit of the glutamine-dependent carbamoyl phosphate synthetase (CPSase). CPSase catalyzes the formation of carbamoyl phosphate from the ammonia moiety of glutamine, carbonate, and phosphate donated by ATP, constituting the first step of 2 biosynthetic pathways, one leading to arginine and/or urea and the other to pyrimidine nucleotides. The large subunit (synthetase) binds the substrates ammonia (free or transferred from glutamine from the small subunit), hydrogencarbonate and ATP and carries out an ATP-coupled ligase reaction, activating hydrogencarbonate by forming carboxy phosphate which reacts with ammonia to form carbamoyl phosphate. In Desulforudis audaxviator (strain MP104C), this protein is Carbamoyl phosphate synthase large chain.